A 296-amino-acid polypeptide reads, in one-letter code: Small ribosomal subunit protein uS2 (296 aa).

Residues 274–284 are compositionally biased toward low complexity; it reads ASSAAPADTWA. The interval 274-296 is disordered; the sequence is ASSAAPADTWAGESGNPDAGVKW.

It belongs to the universal ribosomal protein uS2 family. Component of the small ribosomal subunit. Mature ribosomes consist of a small (40S) and a large (60S) subunit. The 40S subunit contains about 33 different proteins and 1 molecule of RNA (18S). The 60S subunit contains about 49 different proteins and 3 molecules of RNA (25S, 5.8S and 5S). Interacts with RPS21.

Its subcellular location is the cytoplasm. In terms of biological role, required for the assembly and/or stability of the 40S ribosomal subunit. Required for the processing of the 20S rRNA-precursor to mature 18S rRNA in a late step of the maturation of 40S ribosomal subunits. This chain is Small ribosomal subunit protein uS2, found in Ajellomyces capsulatus (strain G186AR / H82 / ATCC MYA-2454 / RMSCC 2432) (Darling's disease fungus).